A 348-amino-acid polypeptide reads, in one-letter code: Dihydroorotase (348 aa).

Zn(2+) is bound by residues His-17 and His-19. Substrate-binding positions include 19 to 21 and Asn-45; that span reads HLR. Zn(2+)-binding residues include Lys-103, His-140, and His-178. N6-carboxylysine is present on Lys-103. His-140 serves as a coordination point for substrate. Leu-223 provides a ligand contact to substrate. Position 251 (Asp-251) interacts with Zn(2+). Asp-251 is an active-site residue. Residues His-255 and Ala-267 each contribute to the substrate site.

Belongs to the metallo-dependent hydrolases superfamily. DHOase family. Class II DHOase subfamily. As to quaternary structure, homodimer. Zn(2+) serves as cofactor.

The catalysed reaction is (S)-dihydroorotate + H2O = N-carbamoyl-L-aspartate + H(+). The protein operates within pyrimidine metabolism; UMP biosynthesis via de novo pathway; (S)-dihydroorotate from bicarbonate: step 3/3. Catalyzes the reversible cyclization of carbamoyl aspartate to dihydroorotate. The polypeptide is Dihydroorotase (Yersinia enterocolitica serotype O:8 / biotype 1B (strain NCTC 13174 / 8081)).